The sequence spans 228 residues: Sec-independent protein translocase protein TatB (228 aa).

Residues 1–21 traverse the membrane as a helical segment; sequence MFDFGLGELVFVGIIALIVLG. Disordered regions lie at residues 126 to 162 and 196 to 228; these read LSDG…AETD and VPHT…VRKS. A compositionally biased stretch (basic residues) spans 206–228; sequence AISRKRGLRPKHRAKPKLRVRKS.

This sequence belongs to the TatB family. In terms of assembly, the Tat system comprises two distinct complexes: a TatABC complex, containing multiple copies of TatA, TatB and TatC subunits, and a separate TatA complex, containing only TatA subunits. Substrates initially bind to the TatABC complex, which probably triggers association of the separate TatA complex to form the active translocon.

The protein resides in the cell inner membrane. Its function is as follows. Part of the twin-arginine translocation (Tat) system that transports large folded proteins containing a characteristic twin-arginine motif in their signal peptide across membranes. Together with TatC, TatB is part of a receptor directly interacting with Tat signal peptides. TatB may form an oligomeric binding site that transiently accommodates folded Tat precursor proteins before their translocation. The protein is Sec-independent protein translocase protein TatB of Neisseria meningitidis serogroup C / serotype 2a (strain ATCC 700532 / DSM 15464 / FAM18).